Here is an 833-residue protein sequence, read N- to C-terminus: Glycerol-3-phosphate acyltransferase (833 aa).

Residues 310-315 (HRSHID) carry the HXXXXD motif motif.

It belongs to the GPAT/DAPAT family.

Its subcellular location is the cell inner membrane. The catalysed reaction is sn-glycerol 3-phosphate + an acyl-CoA = a 1-acyl-sn-glycero-3-phosphate + CoA. It functions in the pathway phospholipid metabolism; CDP-diacylglycerol biosynthesis; CDP-diacylglycerol from sn-glycerol 3-phosphate: step 1/3. This chain is Glycerol-3-phosphate acyltransferase, found in Pseudomonas syringae pv. tomato (strain ATCC BAA-871 / DC3000).